The primary structure comprises 174 residues: MTLILGIDPGSRITGFGVVQQTPRGCVYVASGCIRTGAGELAERLQIVYRGVREVIQTYGPVTMGIEKVFMAKNADSALKLGQARGAAIVAGAEEGMEIAEYTATQVKQAVVGTGAANKEQVQMMVMHMLKLTSKPQIDASDALAIAICHAHTRSSLLPHGLGAARSRGGRLRL.

Catalysis depends on residues Asp8, Glu67, and Asp139. The Mg(2+) site is built by Asp8, Glu67, and Asp139.

Belongs to the RuvC family. In terms of assembly, homodimer which binds Holliday junction (HJ) DNA. The HJ becomes 2-fold symmetrical on binding to RuvC with unstacked arms; it has a different conformation from HJ DNA in complex with RuvA. In the full resolvosome a probable DNA-RuvA(4)-RuvB(12)-RuvC(2) complex forms which resolves the HJ. Mg(2+) serves as cofactor.

It localises to the cytoplasm. The enzyme catalyses Endonucleolytic cleavage at a junction such as a reciprocal single-stranded crossover between two homologous DNA duplexes (Holliday junction).. Its function is as follows. The RuvA-RuvB-RuvC complex processes Holliday junction (HJ) DNA during genetic recombination and DNA repair. Endonuclease that resolves HJ intermediates. Cleaves cruciform DNA by making single-stranded nicks across the HJ at symmetrical positions within the homologous arms, yielding a 5'-phosphate and a 3'-hydroxyl group; requires a central core of homology in the junction. The consensus cleavage sequence is 5'-(A/T)TT(C/G)-3'. Cleavage occurs on the 3'-side of the TT dinucleotide at the point of strand exchange. HJ branch migration catalyzed by RuvA-RuvB allows RuvC to scan DNA until it finds its consensus sequence, where it cleaves and resolves the cruciform DNA. This Pseudomonas fluorescens (strain SBW25) protein is Crossover junction endodeoxyribonuclease RuvC.